Reading from the N-terminus, the 906-residue chain is DNA mismatch repair protein MutS (906 aa).

Residue Gly656–Ser663 participates in ATP binding.

Belongs to the DNA mismatch repair MutS family.

This protein is involved in the repair of mismatches in DNA. It is possible that it carries out the mismatch recognition step. This protein has a weak ATPase activity. The sequence is that of DNA mismatch repair protein MutS from Rhodopseudomonas palustris (strain BisA53).